Reading from the N-terminus, the 294-residue chain is Xyloglucan endotransglucosylase protein 34 (294 aa).

The N-terminal stretch at 1-22 is a signal peptide; the sequence is MAAAYPWTLFLGMLVMVSGTMG. The GH16 domain maps to 23 to 221; that stretch reads AALRKPVDVA…WSKAPFIASY (199 aa). E107 functions as the Nucleophile in the catalytic mechanism. The Proton donor role is filled by E111. Xyloglucan is bound at residue E111. N-linked (GlcNAc...) asparagine glycosylation is present at N115. Xyloglucan is bound by residues 124–126, 134–136, 200–201, and G205; these read QTN, DRE, and DW. 2 cysteine pairs are disulfide-bonded: C229–C238 and C275–C288. R280 is a xyloglucan binding site.

The protein belongs to the glycosyl hydrolase 16 family. XTH group 1 subfamily. Post-translationally, contains at least one intrachain disulfide bond essential for its enzymatic activity. In terms of processing, N-glycosylated. Contains N-acetylglucosamine and mannose. Glycosylation is not essential for its catalytic activity. Expressed in mature gelatinous (G) cell wall layer of the tension wood fibers. Highly expressed in the outer zone of the G layer close to the secondary S2 layer. Not expressed in the mature walls of the ray cells or vessel elements (at protein level). Highest expression in both the phloem/cambium and differentiating xylem of the mature stem containing primarily secondary cell wall forming cells, in root tips and young roots. Expressed at low levels in apical bud.

It localises to the secreted. The protein resides in the cell wall. The protein localises to the extracellular space. It is found in the apoplast. Its subcellular location is the cytoplasm. The catalysed reaction is breaks a beta-(1-&gt;4) bond in the backbone of a xyloglucan and transfers the xyloglucanyl segment on to O-4 of the non-reducing terminal glucose residue of an acceptor, which can be a xyloglucan or an oligosaccharide of xyloglucan.. Catalyzes xyloglucan endotransglycosylation (XET). Cleaves and religates xyloglucan polymers. Does not catalyze xyloglucan endohydrolysis (XEH). Involved in early phases of secondary (S) cell wall formation in fibers of the xylem and phloem vascular tissues of wood stems. May play a role in restructuring primary cell walls, possibly creating and reinforcing the connections between the primary and S cell wall layers. Functions in the gelatinous (G) layers of the tension wood fibers that are involved in bending of the wood stems. May play a role in G fiber shrinking by repairing broken xyloglucan cross-links between G and S2 cell wall layers via its XET activity to maintain connections between the layers. This chain is Xyloglucan endotransglucosylase protein 34, found in Populus tremula x Populus tremuloides (Hybrid aspen).